The sequence spans 236 residues: Sugar fermentation stimulation protein homolog (236 aa).

It belongs to the SfsA family.

The chain is Sugar fermentation stimulation protein homolog from Pseudomonas fluorescens (strain SBW25).